The primary structure comprises 305 residues: Ribonuclease BN (305 aa).

Zn(2+)-binding residues include His64, His66, Asp68, His69, His141, Asp212, and His270. Asp68 acts as the Proton acceptor in catalysis.

The protein belongs to the RNase Z family. RNase BN subfamily. As to quaternary structure, homodimer. The cofactor is Zn(2+).

Its function is as follows. Zinc phosphodiesterase, which has both exoribonuclease and endoribonuclease activities. This is Ribonuclease BN from Escherichia coli O17:K52:H18 (strain UMN026 / ExPEC).